The following is a 354-amino-acid chain: Uroporphyrinogen decarboxylase (354 aa).

Substrate is bound by residues R27 to R31, D77, Y154, T209, and H327.

Belongs to the uroporphyrinogen decarboxylase family. In terms of assembly, homodimer.

The protein resides in the cytoplasm. It catalyses the reaction uroporphyrinogen III + 4 H(+) = coproporphyrinogen III + 4 CO2. It functions in the pathway porphyrin-containing compound metabolism; protoporphyrin-IX biosynthesis; coproporphyrinogen-III from 5-aminolevulinate: step 4/4. In terms of biological role, catalyzes the decarboxylation of four acetate groups of uroporphyrinogen-III to yield coproporphyrinogen-III. This Klebsiella pneumoniae subsp. pneumoniae (strain ATCC 700721 / MGH 78578) protein is Uroporphyrinogen decarboxylase.